The primary structure comprises 20 residues: Protein YfiS (20 aa).

The polypeptide is Protein YfiS (Escherichia coli (strain K12)).